A 541-amino-acid chain; its full sequence is RING finger protein 37 (541 aa).

Residues 258–338 (DVPEEFLDPI…DHFLLQHSIP (81 aa)) enclose the U-box domain. The residue at position 451 (Arg451) is an Asymmetric dimethylarginine. The segment at 483–528 (CASCKRVFSPYFKKEPVYQLPCGHLLCRPCLGEKQRSLPMTCTACQ) adopts an RING-type zinc-finger fold.

Interacts with UBE2L3. Interacts with VCP. As to expression, expressed in liver, heart, brain, kidney and testis.

Its subcellular location is the nucleus. The catalysed reaction is S-ubiquitinyl-[E2 ubiquitin-conjugating enzyme]-L-cysteine + [acceptor protein]-L-lysine = [E2 ubiquitin-conjugating enzyme]-L-cysteine + N(6)-ubiquitinyl-[acceptor protein]-L-lysine.. The protein operates within protein modification; protein ubiquitination. May have a ubiquitin-protein ligase activity acting as an E3 ubiquitin-protein ligase or as a ubiquitin-ubiquitin ligase promoting elongation of ubiquitin chains on substrates. The sequence is that of RING finger protein 37 from Homo sapiens (Human).